A 205-amino-acid polypeptide reads, in one-letter code: Riboflavin kinase (205 aa).

Residues 1–24 form a disordered region; sequence MRPDTSRDPVAGPDSGPEPPFPIR. Residues Thr44 and Asn46 each coordinate Mg(2+). The Nucleophile role is filled by Glu104.

It belongs to the flavokinase family. Requires Zn(2+) as cofactor. Mg(2+) is required as a cofactor.

It carries out the reaction riboflavin + ATP = FMN + ADP + H(+). It functions in the pathway cofactor biosynthesis; FMN biosynthesis; FMN from riboflavin (ATP route): step 1/1. Catalyzes the phosphorylation of riboflavin (vitamin B2) to form flavin mononucleotide (FMN) coenzyme. This Aspergillus terreus (strain NIH 2624 / FGSC A1156) protein is Riboflavin kinase (fmn1).